The primary structure comprises 214 residues: Imidazole glycerol phosphate synthase subunit HisH (214 aa).

Residues 3-211 form the Glutamine amidotransferase type-1 domain; sequence IIAVIDYDMG…VEQVQATLAT (209 aa). The Nucleophile role is filled by C81. Active-site residues include H186 and E188.

As to quaternary structure, heterodimer of HisH and HisF.

The protein resides in the cytoplasm. It carries out the reaction 5-[(5-phospho-1-deoxy-D-ribulos-1-ylimino)methylamino]-1-(5-phospho-beta-D-ribosyl)imidazole-4-carboxamide + L-glutamine = D-erythro-1-(imidazol-4-yl)glycerol 3-phosphate + 5-amino-1-(5-phospho-beta-D-ribosyl)imidazole-4-carboxamide + L-glutamate + H(+). It catalyses the reaction L-glutamine + H2O = L-glutamate + NH4(+). Its pathway is amino-acid biosynthesis; L-histidine biosynthesis; L-histidine from 5-phospho-alpha-D-ribose 1-diphosphate: step 5/9. Functionally, IGPS catalyzes the conversion of PRFAR and glutamine to IGP, AICAR and glutamate. The HisH subunit catalyzes the hydrolysis of glutamine to glutamate and ammonia as part of the synthesis of IGP and AICAR. The resulting ammonia molecule is channeled to the active site of HisF. In Acaryochloris marina (strain MBIC 11017), this protein is Imidazole glycerol phosphate synthase subunit HisH.